Reading from the N-terminus, the 239-residue chain is tRNA (guanine-N(1)-)-methyltransferase (239 aa).

Residues Gly108 and 127 to 132 contribute to the S-adenosyl-L-methionine site; that span reads LGDYVL.

This sequence belongs to the RNA methyltransferase TrmD family. In terms of assembly, homodimer.

It is found in the cytoplasm. The enzyme catalyses guanosine(37) in tRNA + S-adenosyl-L-methionine = N(1)-methylguanosine(37) in tRNA + S-adenosyl-L-homocysteine + H(+). Its function is as follows. Specifically methylates guanosine-37 in various tRNAs. This chain is tRNA (guanine-N(1)-)-methyltransferase, found in Streptococcus pneumoniae serotype 19F (strain G54).